Here is a 723-residue protein sequence, read N- to C-terminus: Nucleolar protein 11 (723 aa).

Position 346 is an N6-methyllysine (lysine 346). The disordered stretch occupies residues 549-572 (FGPEDGNCSEDSQQLNDKPADTAH).

In terms of assembly, interacts with UTP4. Interacts with FBL/fibrillarin in a transcription-dependent manner. May associate with the proposed t-UTP subcomplex of the SSU processome containing at least UTP4, WDR43, HEATR1, UTP15, WDR75.

It is found in the nucleus. It localises to the nucleolus. Its function is as follows. Ribosome biogenesis factor. May be required for both optimal rDNA transcription and small subunit (SSU) pre-rRNA processing at sites A', A0, 1 and 2b. This Mus musculus (Mouse) protein is Nucleolar protein 11 (Nol11).